A 408-amino-acid polypeptide reads, in one-letter code: MEGPAFSKPLKDKINPWGPLIILGILIRAGVSVQHDSPHQVFNVTWRVTNLMTGQTANATSLLGTMTDAFPKLYFDLCDLIGDDWDETGLGCRTPGGRKRARTFDFYVCPGHTVPTGCGGPREGYCGKWGCETTGQAYWKPSSSWDLISLKRGNTPRNQGPCYDSSAVSSDIKGATPGGRCNPLVLEFTDAGKKASWDGPKVWGLRLYRSTGTDPVTRFSLTRQVLNIGPRVPIGPNPVITDQLPPSRPVQIMLPRPPQPPPPGAASIVPETAPPSQQPGTGDRLLNLVDGAYQALNLTNPDKTQDCWLCLVSGPPYYEGVAVLGTYYNHTSALKEECCFYADHTGLVRDSMAKLRERLTQRQKLFESSQGWFEELFNRSTWFTTLIFTIIGPLIILLLILLFWTLHS.

The signal sequence occupies residues 1–32 (MEGPAFSKPLKDKINPWGPLIILGILIRAGVS). Over 33-385 (VQHDSPHQVF…LFNRSTWFTT (353 aa)) the chain is Virion surface. N43 and N58 each carry an N-linked (GlcNAc...) asparagine; by host glycan. Positions 256 to 281 (RPPQPPPPGAASIVPETAPPSQQPGT) are disordered. 2 N-linked (GlcNAc...) asparagine; by host glycosylation sites follow: N297 and N329. Residues 335–371 (KEECCFYADHTGLVRDSMAKLRERLTQRQKLFESSQG) are a coiled coil. N-linked (GlcNAc...) asparagine; by host glycosylation occurs at N378. Residues 386–406 (LIFTIIGPLIILLLILLFWTL) form a helical membrane-spanning segment. Residues 407–408 (HS) lie on the Intravirion side of the membrane.

Its subcellular location is the host endoplasmic reticulum membrane. The protein resides in the host cell membrane. It is found in the virion membrane. Envelope-like membrane glycoprotein. In Mus musculus (Mouse), this protein is Glycoprotein 55 (env).